The following is a 120-amino-acid chain: Large ribosomal subunit protein uL18 (120 aa).

Positions 1–26 (MKLTRRESKQRRHRRVRGKVQGSPER) are disordered. Over residues 8-18 (SKQRRHRRVRG) the composition is skewed to basic residues.

The protein belongs to the universal ribosomal protein uL18 family. Part of the 50S ribosomal subunit; part of the 5S rRNA/L5/L18/L25 subcomplex. Contacts the 5S and 23S rRNAs.

Its function is as follows. This is one of the proteins that bind and probably mediate the attachment of the 5S RNA into the large ribosomal subunit, where it forms part of the central protuberance. The chain is Large ribosomal subunit protein uL18 from Trichormus variabilis (strain ATCC 29413 / PCC 7937) (Anabaena variabilis).